Consider the following 249-residue polypeptide: Tumor necrosis factor ligand superfamily member 12 (249 aa).

Residues 1 to 21 are Cytoplasmic-facing; the sequence is MAARRSQRRRGRRGEPGTALL. A helical; Signal-anchor for type II membrane protein transmembrane segment spans residues 22-42; that stretch reads VPLALGLGLALACLGLLLAVV. The Extracellular segment spans residues 43–249; it reads SLGSRASLSA…LTYFGLFQVH (207 aa). A disordered region spans residues 55 to 85; the sequence is PAQEELVAEEDQDPSELNPQTEESQDPAPFL. The segment covering 56 to 68 has biased composition (acidic residues); it reads AQEELVAEEDQDP. One can recognise a THD domain in the interval 107–248; sequence IAAHYEVHPR…FLTYFGLFQV (142 aa). Asn139 carries N-linked (GlcNAc...) asparagine glycosylation. A disulfide bridge links Cys191 with Cys210.

It belongs to the tumor necrosis factor family. As to quaternary structure, homotrimer. Interacts with the angiogenic factor AGGF1/VG5Q. Post-translationally, the soluble form derives from the membrane form by proteolytic processing. In terms of tissue distribution, highly expressed in adult heart, pancreas, skeletal muscle, brain, colon, small intestine, lung, ovary, prostate, spleen, lymph node, appendix and peripheral blood lymphocytes. Low expression in kidney, testis, liver, placenta, thymus and bone marrow. Also detected in fetal kidney, liver, lung and brain.

Its subcellular location is the cell membrane. It localises to the secreted. Its function is as follows. Binds to FN14 and possibly also to TNRFSF12/APO3. Weak inducer of apoptosis in some cell types. Mediates NF-kappa-B activation. Promotes angiogenesis and the proliferation of endothelial cells. Also involved in induction of inflammatory cytokines. Promotes IL8 secretion. This is Tumor necrosis factor ligand superfamily member 12 (TNFSF12) from Homo sapiens (Human).